A 494-amino-acid polypeptide reads, in one-letter code: Glutamyl-tRNA(Gln) amidotransferase subunit A (494 aa).

Active-site charge relay system residues include lysine 79 and serine 159. Serine 183 (acyl-ester intermediate) is an active-site residue.

The protein belongs to the amidase family. GatA subfamily. In terms of assembly, heterotrimer of A, B and C subunits.

It catalyses the reaction L-glutamyl-tRNA(Gln) + L-glutamine + ATP + H2O = L-glutaminyl-tRNA(Gln) + L-glutamate + ADP + phosphate + H(+). In terms of biological role, allows the formation of correctly charged Gln-tRNA(Gln) through the transamidation of misacylated Glu-tRNA(Gln) in organisms which lack glutaminyl-tRNA synthetase. The reaction takes place in the presence of glutamine and ATP through an activated gamma-phospho-Glu-tRNA(Gln). The polypeptide is Glutamyl-tRNA(Gln) amidotransferase subunit A (Bartonella bacilliformis (strain ATCC 35685 / KC583 / Herrer 020/F12,63)).